The sequence spans 149 residues: Large ribosomal subunit protein bL9 (149 aa).

It belongs to the bacterial ribosomal protein bL9 family.

Functionally, binds to the 23S rRNA. This is Large ribosomal subunit protein bL9 from Acidothermus cellulolyticus (strain ATCC 43068 / DSM 8971 / 11B).